Consider the following 273-residue polypeptide: Type IV secretion system protein PtlF (273 aa).

The N-terminal stretch at 1-20 is a signal peptide; sequence MMAARMMAAGLAATALSAHA.

The protein belongs to the TrbG/VirB9 family. Forms a complex with PtlI.

It is found in the cell outer membrane. Component of the type IV secretion system ptl required for secretion of assembled pertussis toxin (PTX) through the outer membrane. The chain is Type IV secretion system protein PtlF (ptlF) from Bordetella pertussis (strain Tohama I / ATCC BAA-589 / NCTC 13251).